Here is a 218-residue protein sequence, read N- to C-terminus: Small ribosomal subunit protein uS3c (218 aa).

Residues 47–118 (IRRHMRSSSN…KLNIAIVKVA (72 aa)) enclose the KH type-2 domain.

The protein belongs to the universal ribosomal protein uS3 family. Part of the 30S ribosomal subunit.

The protein localises to the plastid. Its subcellular location is the chloroplast. The chain is Small ribosomal subunit protein uS3c (rps3) from Cycas taitungensis (Prince sago).